The chain runs to 158 residues: S-ribosylhomocysteine lyase (158 aa).

His-56, His-60, and Cys-125 together coordinate Fe cation.

The protein belongs to the LuxS family. As to quaternary structure, homodimer. Fe cation is required as a cofactor.

The catalysed reaction is S-(5-deoxy-D-ribos-5-yl)-L-homocysteine = (S)-4,5-dihydroxypentane-2,3-dione + L-homocysteine. Its function is as follows. Involved in the synthesis of autoinducer 2 (AI-2) which is secreted by bacteria and is used to communicate both the cell density and the metabolic potential of the environment. The regulation of gene expression in response to changes in cell density is called quorum sensing. Catalyzes the transformation of S-ribosylhomocysteine (RHC) to homocysteine (HC) and 4,5-dihydroxy-2,3-pentadione (DPD). This Leuconostoc mesenteroides subsp. mesenteroides (strain ATCC 8293 / DSM 20343 / BCRC 11652 / CCM 1803 / JCM 6124 / NCDO 523 / NBRC 100496 / NCIMB 8023 / NCTC 12954 / NRRL B-1118 / 37Y) protein is S-ribosylhomocysteine lyase.